The chain runs to 307 residues: Ubiquitin recognition factor in ER-associated degradation protein 1 (307 aa).

Methionine 1 bears the N-acetylmethionine mark. Phosphoserine is present on residues serine 129, serine 231, serine 245, serine 247, and serine 299. Disordered regions lie at residues 231–256 (SGNR…DIKR) and 288–307 (GRFV…GRKP).

It belongs to the UFD1 family. As to quaternary structure, heterodimer with NPLOC4, this heterodimer binds VCP and inhibits Golgi membrane fusion. Interacts with USP13. Interacts with ZFAND2B; probably through VCP. As to expression, found in adult heart, skeletal muscle and pancreas, and in fetal liver and kidney.

It localises to the nucleus. The protein resides in the cytoplasm. Its subcellular location is the cytosol. It functions in the pathway protein degradation; proteasomal ubiquitin-dependent pathway. Essential component of the ubiquitin-dependent proteolytic pathway which degrades ubiquitin fusion proteins. The ternary complex containing UFD1, VCP and NPLOC4 binds ubiquitinated proteins and is necessary for the export of misfolded proteins from the ER to the cytoplasm, where they are degraded by the proteasome. The NPLOC4-UFD1-VCP complex regulates spindle disassembly at the end of mitosis and is necessary for the formation of a closed nuclear envelope. It may be involved in the development of some ectoderm-derived structures. Acts as a negative regulator of type I interferon production via the complex formed with VCP and NPLOC4, which binds to RIGI and recruits RNF125 to promote ubiquitination and degradation of RIGI. In Homo sapiens (Human), this protein is Ubiquitin recognition factor in ER-associated degradation protein 1.